The sequence spans 281 residues: Bifunctional N-acyl-homoserine lactone acylase/prephenate dehydratase (281 aa).

The Prephenate dehydratase domain maps to isoleucine 6–arginine 181. The ACT domain occupies threonine 196 to proline 273. L-phenylalanine is bound by residues alanine 207, leucine 208, asparagine 221, and methionine 222.

Homodimer.

The catalysed reaction is an N-acyl-L-homoserine lactone + H2O = L-homoserine lactone + a carboxylate. The enzyme catalyses prephenate + H(+) = 3-phenylpyruvate + CO2 + H2O. Its pathway is amino-acid biosynthesis; L-phenylalanine biosynthesis; phenylpyruvate from prephenate: step 1/1. Multifunctional enzyme that acts on N-acyl-homoserine lactones (AHLs), beta-lactam antibiotics and shows prephenate dehydratase activity. Acts as an acylase on AHL and hydrolyzes the amide bond of the acyl side-chain of AHL molecules, releasing homoserine lactone (HSL) and the fatty acid. Can use different 3-oxo-acyl homoserine lactones, such as 3-oxo-decanoyl homoserine lactone, which is the preferred substrate, 3-oxo-octanoyl homoserine lactone, 3-oxo-hexanoyl homoserine lactone and 3-oxo-dodecanoyl homoserine lactone. It can also degrade various beta-lactam antibiotics, including penicillin G, amoxicillin and ampicillin, but not cefotaxime. In addition, it can complement a phenylalanine auxotrophic E.coli mutant, which carries a kanamycin gene inserted into pheA, suggesting that GqqA can also function as a prephenate dehydratase. Involved in bacterial quorum quenching (QQ) and cellulose biofilm formation. The protein is Bifunctional N-acyl-homoserine lactone acylase/prephenate dehydratase of Komagataeibacter europaeus (Gluconacetobacter europaeus).